Here is a 404-residue protein sequence, read N- to C-terminus: Exodeoxyribonuclease 7 large subunit (404 aa).

Belongs to the XseA family. Heterooligomer composed of large and small subunits.

The protein localises to the cytoplasm. The enzyme catalyses Exonucleolytic cleavage in either 5'- to 3'- or 3'- to 5'-direction to yield nucleoside 5'-phosphates.. In terms of biological role, bidirectionally degrades single-stranded DNA into large acid-insoluble oligonucleotides, which are then degraded further into small acid-soluble oligonucleotides. This Tropheryma whipplei (strain TW08/27) (Whipple's bacillus) protein is Exodeoxyribonuclease 7 large subunit.